The chain runs to 89 residues: Small ribosomal subunit protein uS15 (89 aa).

The protein belongs to the universal ribosomal protein uS15 family. Part of the 30S ribosomal subunit. Forms a bridge to the 50S subunit in the 70S ribosome, contacting the 23S rRNA.

One of the primary rRNA binding proteins, it binds directly to 16S rRNA where it helps nucleate assembly of the platform of the 30S subunit by binding and bridging several RNA helices of the 16S rRNA. Its function is as follows. Forms an intersubunit bridge (bridge B4) with the 23S rRNA of the 50S subunit in the ribosome. The sequence is that of Small ribosomal subunit protein uS15 from Micrococcus luteus (strain ATCC 4698 / DSM 20030 / JCM 1464 / CCM 169 / CCUG 5858 / IAM 1056 / NBRC 3333 / NCIMB 9278 / NCTC 2665 / VKM Ac-2230) (Micrococcus lysodeikticus).